The primary structure comprises 62 residues: uncharacterized protein (62 aa).

A helical membrane pass occupies residues 15 to 37; that stretch reads FSSGVLISNFLLFNFIIISHSSL. Positions 41–56 are enriched in low complexity; the sequence is TTTTTTTTTTTTNTKS. A disordered region spans residues 41–62; it reads TTTTTTTTTTTTNTKSTLHRSG.

The protein resides in the membrane. This is an uncharacterized protein from Dictyostelium discoideum (Social amoeba).